A 470-amino-acid polypeptide reads, in one-letter code: Uronate isomerase (470 aa).

It belongs to the metallo-dependent hydrolases superfamily. Uronate isomerase family.

The catalysed reaction is D-glucuronate = D-fructuronate. It carries out the reaction aldehydo-D-galacturonate = keto-D-tagaturonate. It functions in the pathway carbohydrate metabolism; pentose and glucuronate interconversion. The chain is Uronate isomerase from Salmonella agona (strain SL483).